A 366-amino-acid chain; its full sequence is Galactoside alpha-(1,2)-fucosyltransferase 1 (366 aa).

Topologically, residues 1 to 8 (MWPPSHRQ) are cytoplasmic. A helical; Signal-anchor for type II membrane protein transmembrane segment spans residues 9–25 (LCRAFLLVCVFSVISFF). The Lumenal portion of the chain corresponds to 26–366 (LHIHQDSFPH…LSPLWTLAKP (341 aa)). N-linked (GlcNAc...) asparagine glycans are attached at residues Asn-66, Asn-302, and Asn-328.

It belongs to the glycosyltransferase 11 family.

It localises to the golgi apparatus. The protein localises to the golgi stack membrane. The enzyme catalyses a beta-D-galactosyl-(1-&gt;4)-N-acetyl-beta-D-glucosaminyl derivative + GDP-beta-L-fucose = an alpha-L-Fuc-(1-&gt;2)-beta-D-Gal-(1-&gt;4)-beta-D-GlcNAc derivative + GDP + H(+). It carries out the reaction a ganglioside GA1 + GDP-beta-L-fucose = a ganglioside Fuc-GA1 + GDP + H(+). The catalysed reaction is a beta-D-Gal-(1-&gt;3)-beta-D-GlcNAc-(1-&gt;3)-beta-D-Gal-(1-&gt;4)-beta-D-Glc-(1&lt;-&gt;1')-Cer(d18:1(4E)) + GDP-beta-L-fucose = alpha-L-fucosyl-(1-&gt;2)- beta-D-galactosyl-(1-&gt;3)-N-acetyl-beta-D-glucosaminyl-(1-&gt;3)-beta-D-galactosyl-(1-&gt;4)-beta-D-glucosyl-(1&lt;-&gt;1')-N-acylsphing-4-enine + GDP + H(+). It catalyses the reaction a neolactoside nLc4Cer(d18:1(4E)) + GDP-beta-L-fucose = a neolactoside IV(2)-alpha-Fuc-nLc4Cer(d18:1(4E)) + GDP + H(+). The enzyme catalyses a ganglioside GM1 + GDP-beta-L-fucose = a ganglioside Fuc-GM1 + GDP + H(+). It carries out the reaction beta-D-galactosyl-(1-&gt;3)-N-acetyl-D-galactosamine + GDP-beta-L-fucose = alpha-L-fucosyl-(1-&gt;2)-beta-D-galactosyl-(1-&gt;3)-N-acetyl-D-galactosamine + GDP + H(+). The protein operates within protein modification; protein glycosylation. Its function is as follows. Catalyzes the transfer of L-fucose, from a guanosine diphosphate-beta-L-fucose, to the terminal galactose residue of glycoconjugates through an alpha(1,2) linkage leading to H antigen synthesis that is an intermediate substrate in the synthesis of ABO blood group antigens. H antigen is essential for maturation of the glomerular layer of the main olfactory bulb, in cell migration and early cell-cell contacts during tumor associated angiogenesis. Preferentially fucosylates soluble lactose and to a lesser extent fucosylates glycolipids gangliosides GA1 and GM1a. The sequence is that of Galactoside alpha-(1,2)-fucosyltransferase 1 from Gorilla gorilla gorilla (Western lowland gorilla).